The chain runs to 893 residues: Probable disease resistance protein At1g62630 (893 aa).

Residues 24-68 (GSYTHNLEKNLVALETTMEELKAKRDDLLRRLKREEDRGLQRLSE) adopt a coiled-coil conformation. The region spanning 136–440 (TEQASTSAFE…CEEIIDGSEG (305 aa)) is the NB-ARC domain. Residue 179-186 (GMGGVGKT) coordinates ATP. LRR repeat units follow at residues 516 to 537 (VVRRMSLMGNKIHHLVGSYECM), 538 to 559 (ELTTLLLGEGEYGSIWRWSEIK), 571 to 593 (KLAVLDLSHNQSLFELPEEISNL), 595 to 617 (SLKYLNLSHTGIRHLSKGIQELK), 618 to 640 (KIIHLNLEHTSKLESIDGISSLH), and 641 to 663 (NLKVLKLYGSRLPWDLNTVKELE).

This sequence belongs to the disease resistance NB-LRR family.

Functionally, probable disease resistance protein. This Arabidopsis thaliana (Mouse-ear cress) protein is Probable disease resistance protein At1g62630.